Here is a 160-residue protein sequence, read N- to C-terminus: CXXC motif containing zinc binding protein (160 aa).

Zn(2+) contacts are provided by Cys33, Cys36, Cys67, and Cys70. Ser75 is modified (phosphoserine).

This sequence belongs to the UPF0587 family. Monomer.

This Mus musculus (Mouse) protein is CXXC motif containing zinc binding protein (Czib).